A 256-amino-acid chain; its full sequence is Thiazole synthase (256 aa).

The Schiff-base intermediate with DXP role is filled by Lys95. Residues Gly156, 182-183 (AG), and 204-205 (NT) each bind 1-deoxy-D-xylulose 5-phosphate.

The protein belongs to the ThiG family. Homotetramer. Forms heterodimers with either ThiH or ThiS.

The protein resides in the cytoplasm. The enzyme catalyses [ThiS sulfur-carrier protein]-C-terminal-Gly-aminoethanethioate + 2-iminoacetate + 1-deoxy-D-xylulose 5-phosphate = [ThiS sulfur-carrier protein]-C-terminal Gly-Gly + 2-[(2R,5Z)-2-carboxy-4-methylthiazol-5(2H)-ylidene]ethyl phosphate + 2 H2O + H(+). The protein operates within cofactor biosynthesis; thiamine diphosphate biosynthesis. Functionally, catalyzes the rearrangement of 1-deoxy-D-xylulose 5-phosphate (DXP) to produce the thiazole phosphate moiety of thiamine. Sulfur is provided by the thiocarboxylate moiety of the carrier protein ThiS. In vitro, sulfur can be provided by H(2)S. The chain is Thiazole synthase from Salmonella paratyphi A (strain ATCC 9150 / SARB42).